Reading from the N-terminus, the 507-residue chain is Anthranilate synthase component 1 (507 aa).

Ser65 is a binding site for L-tryptophan. Position 81 is a phosphoserine (Ser81). Thr223 bears the Phosphothreonine mark. 280–282 provides a ligand contact to L-tryptophan; that stretch reads PYL. 316 to 317 provides a ligand contact to chorismate; sequence GT. Glu343 provides a ligand contact to Mg(2+). Residues Tyr431, Arg452, 466-468, and Gly468 each bind chorismate; that span reads GGG. Glu481 contributes to the Mg(2+) binding site.

It belongs to the anthranilate synthase component I family. Tetramer of two components I and two components II. Mg(2+) serves as cofactor.

It carries out the reaction chorismate + L-glutamine = anthranilate + pyruvate + L-glutamate + H(+). Its pathway is amino-acid biosynthesis; L-tryptophan biosynthesis; L-tryptophan from chorismate: step 1/5. This chain is Anthranilate synthase component 1 (TRP2), found in Saccharomyces cerevisiae (strain ATCC 204508 / S288c) (Baker's yeast).